Here is a 416-residue protein sequence, read N- to C-terminus: Serine hydroxymethyltransferase (416 aa).

Residues Leu118 and 122–124 (GHL) each bind (6S)-5,6,7,8-tetrahydrofolate. Lys226 bears the N6-(pyridoxal phosphate)lysine mark. (6S)-5,6,7,8-tetrahydrofolate contacts are provided by residues Glu242 and 350 to 352 (SPF).

Belongs to the SHMT family. In terms of assembly, homodimer. The cofactor is pyridoxal 5'-phosphate.

The protein resides in the cytoplasm. The enzyme catalyses (6R)-5,10-methylene-5,6,7,8-tetrahydrofolate + glycine + H2O = (6S)-5,6,7,8-tetrahydrofolate + L-serine. The protein operates within one-carbon metabolism; tetrahydrofolate interconversion. Its pathway is amino-acid biosynthesis; glycine biosynthesis; glycine from L-serine: step 1/1. Functionally, catalyzes the reversible interconversion of serine and glycine with tetrahydrofolate (THF) serving as the one-carbon carrier. This reaction serves as the major source of one-carbon groups required for the biosynthesis of purines, thymidylate, methionine, and other important biomolecules. Also exhibits THF-independent aldolase activity toward beta-hydroxyamino acids, producing glycine and aldehydes, via a retro-aldol mechanism. The chain is Serine hydroxymethyltransferase from Wolinella succinogenes (strain ATCC 29543 / DSM 1740 / CCUG 13145 / JCM 31913 / LMG 7466 / NCTC 11488 / FDC 602W) (Vibrio succinogenes).